Here is a 385-residue protein sequence, read N- to C-terminus: Meiotic recombination protein SPO11-2 (385 aa).

Residues 24-169 form the Topo IIA-type catalytic domain; sequence LPPAEVRARI…LGIMASSRGA (146 aa). The O-(5'-phospho-DNA)-tyrosine intermediate role is filled by Y126. Residues E219 and D272 each contribute to the Mg(2+) site.

The protein belongs to the TOP6A family. Interacts with TOP6B. Mg(2+) is required as a cofactor.

The protein localises to the nucleus. The enzyme catalyses ATP-dependent breakage, passage and rejoining of double-stranded DNA.. In terms of biological role, required for meiotic recombination. Mediates DNA cleavage that forms the double-strand breaks (DSB) that initiate meiotic recombination. This is Meiotic recombination protein SPO11-2 (SPO11-2) from Oryza sativa subsp. japonica (Rice).